Here is a 346-residue protein sequence, read N- to C-terminus: B3 domain-containing protein At5g60142 (346 aa).

Residues 13–109 (PKFFKVYLPD…CFNFCIYGRA (97 aa)) constitute a DNA-binding region (TF-B3). Disordered regions lie at residues 158–179 (QDYN…ADND) and 192–243 (TSSE…HDRQ). A compositionally biased stretch (acidic residues) spans 192–217 (TSSEDIIVIDDDDDDDDQDYGDDDHA). Residues 218 to 229 (DVEKERWRGVKT) show a composition bias toward basic and acidic residues.

The protein localises to the nucleus. In Arabidopsis thaliana (Mouse-ear cress), this protein is B3 domain-containing protein At5g60142.